A 408-amino-acid chain; its full sequence is Protein trichome birefringence-like 14 (408 aa).

A helical; Signal-anchor for type II membrane protein transmembrane segment spans residues 11–31; it reads GSVSLALIVLILLVIILLVSE. Residues 131-133 carry the GDS motif motif; that stretch reads GDS. Positions 387–401 match the DCXHWCLPGXXDXWN motif motif; the sequence is DCLHWCLPGIPDTWN.

This sequence belongs to the PC-esterase family. TBL subfamily.

The protein resides in the membrane. In terms of biological role, may act as a bridging protein that binds pectin and other cell wall polysaccharides. Probably involved in maintaining esterification of pectins. May be involved in the specific O-acetylation of cell wall polymers. The chain is Protein trichome birefringence-like 14 (TBL14) from Arabidopsis thaliana (Mouse-ear cress).